The chain runs to 160 residues: Lipoprotein signal peptidase (160 aa).

3 helical membrane passes run 13–33 (IYIT…RLII), 72–92 (WFLS…ITKL), and 104–124 (SLII…GFVV). Catalysis depends on residues Asp-125 and Asp-143. Residues 134–154 (WHFATFNIADCSIFIGIIILM) form a helical membrane-spanning segment.

Belongs to the peptidase A8 family.

The protein localises to the cell inner membrane. It carries out the reaction Release of signal peptides from bacterial membrane prolipoproteins. Hydrolyzes -Xaa-Yaa-Zaa-|-(S,diacylglyceryl)Cys-, in which Xaa is hydrophobic (preferably Leu), and Yaa (Ala or Ser) and Zaa (Gly or Ala) have small, neutral side chains.. It functions in the pathway protein modification; lipoprotein biosynthesis (signal peptide cleavage). This protein specifically catalyzes the removal of signal peptides from prolipoproteins. This chain is Lipoprotein signal peptidase, found in Buchnera aphidicola subsp. Acyrthosiphon pisum (strain APS) (Acyrthosiphon pisum symbiotic bacterium).